A 304-amino-acid polypeptide reads, in one-letter code: Protein BOBBER 1 (304 aa).

N-acetylalanine is present on Ala2. Residues 54 to 106 (EDEIVVAVRAAKEKLKKAEKKKAEKESVKPVEKKAEKEIVKLVEKKVEKESVK) are a coiled coil. Positions 111 to 141 (ASSAEPIEVEKPKEEEEKKESGPIVPNKGNG) are disordered. The span at 118–131 (EVEKPKEEEEKKES) shows a compositional bias: basic and acidic residues. Positions 142-231 (TDLENYSWIQ…DQMEWWKCCV (90 aa)) constitute a CS domain.

As to expression, expressed in all seedling tissues with highest expression levels at the root tip.

Its subcellular location is the cytoplasm. It localises to the cytoplasmic granule. Functionally, small heat shock protein required for the establishment of auxin gradients and for patterning of the apical domain of the embryo. Involved in the specification of the cotyledon primordia. Also required for normal inflorescence and floral meristem function, normal developmental patterning and thermotolerance. Acts as a molecular chaperone. The chain is Protein BOBBER 1 (BOB1) from Arabidopsis thaliana (Mouse-ear cress).